A 274-amino-acid chain; its full sequence is Mitochondrial S-adenosylmethionine carrier protein (274 aa).

3 Solcar repeats span residues 4–77, 86–168, and 177–265; these read PGFV…VKWF, LTPM…LKAL, and VDSW…THSL. 6 helical membrane passes run 5-25, 49-69, 85-105, 142-162, 182-202, and 238-258; these read GFVA…LILF, IYAG…AFFI, YLTP…ACLI, RGYK…FPLW, SAVC…PLDV, and FAGV…FLGA.

This sequence belongs to the mitochondrial carrier (TC 2.A.29) family. As to expression, widely expressed. Highly expressed in testis, with moderate expression in brain, heart, kidney, lung, skeletal muscle, pancreas, small intestine and liver, and low expression in spleen.

It localises to the mitochondrion inner membrane. The catalysed reaction is S-adenosyl-L-homocysteine(out) + S-adenosyl-L-methionine(in) = S-adenosyl-L-homocysteine(in) + S-adenosyl-L-methionine(out). With respect to regulation, strongly inhibited by tannic acid and Bromocresol Purple. Mitochondrial S-adenosyl-L-methionine/S-adenosyl-L-homocysteine antiporter. Mediates the exchange of cytosolic S-adenosyl-L-methionine, the predominant methyl-group donor for macromolecule methylation processes, for mitochondrial S-adenosylhomocysteine(SAH), a by-product of methylation reactions. The chain is Mitochondrial S-adenosylmethionine carrier protein from Homo sapiens (Human).